Here is a 331-residue protein sequence, read N- to C-terminus: uncharacterized protein (331 aa).

5 consecutive Pentapeptide repeat domains span residues 50–89 (ENLQNADLSGFTLISVDFERTNLIGSNLQRTFLTKARLGH), 90–129 (CQMNWADLTYAKLNQADLSHADLTKASLYGAFAVKTNFKG), 140–179 (ANLRGANLEQTNLTGANLFAANLREANFQKADFSWANLQE), 185–224 (ANLRDARLWATDLRRAFMKEMDLSALSLHGLAMDGAKLTG), and 230–269 (TNLSHSSLRGANLRGADLTGANLTGVDLTGADLMGANLTQ).

This is an uncharacterized protein from Synechocystis sp. (strain ATCC 27184 / PCC 6803 / Kazusa).